The chain runs to 88 residues: Small ribosomal subunit protein uS17 (88 aa).

The protein belongs to the universal ribosomal protein uS17 family. As to quaternary structure, part of the 30S ribosomal subunit.

In terms of biological role, one of the primary rRNA binding proteins, it binds specifically to the 5'-end of 16S ribosomal RNA. The polypeptide is Small ribosomal subunit protein uS17 (Pseudomonas putida (strain ATCC 700007 / DSM 6899 / JCM 31910 / BCRC 17059 / LMG 24140 / F1)).